The sequence spans 259 residues: Glutamate racemase (259 aa).

Substrate contacts are provided by residues 9-10 and 41-42; these read DS and YG. Cys-73 acts as the Proton donor/acceptor in catalysis. 74–75 provides a ligand contact to substrate; it reads NT. Catalysis depends on Cys-183, which acts as the Proton donor/acceptor. 184-185 serves as a coordination point for substrate; that stretch reads TH.

This sequence belongs to the aspartate/glutamate racemases family.

The catalysed reaction is L-glutamate = D-glutamate. Its pathway is cell wall biogenesis; peptidoglycan biosynthesis. Its function is as follows. Provides the (R)-glutamate required for cell wall biosynthesis. The polypeptide is Glutamate racemase (Shewanella frigidimarina (strain NCIMB 400)).